A 391-amino-acid polypeptide reads, in one-letter code: MSRFLICSFALVLLYPAGIDMYLVGLPRIAADLNASEAQLHIAFSVYLAGMAAAMLFAGKVADRSGRKPVAIPGAALFIIASVFCSLAETSTLFLAGRFLQGLGAGCCYVVAFAILRDTLDDRRRAKVLSLLNGITCIIPVLAPVLGHLIMLKFPWQSLFWTMATMGIAVLMLSLFILKETRPAAPTNSDKPRENSESLLNRFFLSRVVITTLSVSVILTFVNTSPVLLMEIMGFERGEYATIMALTAGVSMTVSFSTPFALGIFKPRTLMITSQVLFLAAGITLAVSPSHAVSLFGITLICAGFSVGFGVAMSQALGPFSLRAGVASSTLGIAQVCGSSLWIWLAAVVGIGAWNMLIGILIACSIVSLLLIMFVAPGRPVAAHEEIHHHA.

A run of 12 helical transmembrane segments spans residues 4-24, 42-62, 69-89, 93-113, 131-151, 158-178, 203-222, 245-265, 269-289, 293-313, 331-351, and 356-376; these read FLICSFALVLLYPAGIDMYLV, IAFSVYLAGMAAAMLFAGKVA, PVAIPGAALFIIASVFCSLAE, LFLAGRFLQGLGAGCCYVVAF, LLNGITCIIPVLAPVLGHLIM, SLFWTMATMGIAVLMLSLFIL, FFLSRVVITTLSVSVILTFV, ALTAGVSMTVSFSTPFALGIF, TLMITSQVLFLAAGITLAVSP, VSLFGITLICAGFSVGFGVAM, LGIAQVCGSSLWIWLAAVVGI, and MLIGILIACSIVSLLLIMFVA.

The protein belongs to the major facilitator superfamily. DHA1 family. MdtL (TC 2.A.1.2.22) subfamily.

It is found in the cell inner membrane. Functionally, confers resistance to chloramphenicol. The protein is Multidrug resistance protein MdtL of Escherichia coli O17:K52:H18 (strain UMN026 / ExPEC).